The chain runs to 67 residues: MKKTCVVSVFLVLLLLKFHDLSMGEEISPLKKVARREDNLVLSCAEFPCPEGYICDTASQKCRPGTD.

Residues 1–24 (MKKTCVVSVFLVLLLLKFHDLSMG) form the signal peptide. Positions 25–36 (EEISPLKKVARR) are excised as a propeptide. Cystine bridges form between cysteine 44–cysteine 55 and cysteine 49–cysteine 62.

As to expression, expressed by the venom gland.

The protein resides in the secreted. The sequence is that of Kappa-scoloptoxin(04)-Ssd1b from Scolopendra dehaani (Thai centipede).